The sequence spans 188 residues: UPF0301 protein Smal_0940 (188 aa).

This sequence belongs to the UPF0301 (AlgH) family.

The sequence is that of UPF0301 protein Smal_0940 from Stenotrophomonas maltophilia (strain R551-3).